A 2508-amino-acid chain; its full sequence is Male gametocyte surface protein P230p (2508 aa).

The signal sequence occupies residues 1–34 (MFIYLFIYLFFKMDKKRTFYYLFFFFTFLVYVLY). N-linked (GlcNAc...) asparagine glycans are attached at residues Asn230, Asn254, Asn362, and Asn414. A 6-Cys 1 domain is found at 394 to 516 (KILGLSTNEK…GLGETSVDKD (123 aa)). Cys443 and Cys493 are oxidised to a cystine. 2 N-linked (GlcNAc...) asparagine glycosylation sites follow: Asn601 and Asn674. 6-Cys domains are found at residues 676-800 (SVSF…IVKR), 831-1096 (ITYL…LKSF), 1099-1231 (PIEG…LELN), 1268-1428 (KKHI…IPQH), and 1433-1565 (KFYG…NEDI). Residues Cys680 and Cys700 are joined by a disulfide bond. A glycan (N-linked (GlcNAc...) asparagine) is linked at Asn703. Intrachain disulfides connect Cys714–Cys775 and Cys725–Cys773. 6 N-linked (GlcNAc...) asparagine glycosylation sites follow: Asn779, Asn849, Asn986, Asn995, Asn1065, and Asn1074. Disulfide bonds link Cys835/Cys856 and Cys871/Cys1072. Cystine bridges form between Cys1103/Cys1129, Cys1144/Cys1206, and Cys1157/Cys1204. Residue Asn1231 is glycosylated (N-linked (GlcNAc...) asparagine). 5 disulfide bridges follow: Cys1272–Cys1293, Cys1308–Cys1404, Cys1437–Cys1464, Cys1478–Cys1547, and Cys1488–Cys1545. N-linked (GlcNAc...) asparagine glycosylation is present at Asn1385. N-linked (GlcNAc...) asparagine glycosylation is found at Asn1525, Asn1550, Asn1567, Asn1750, Asn1755, and Asn1788. 2 consecutive 6-Cys domains span residues 1656 to 1804 (KKKI…IKKN) and 1807 to 1984 (KILG…IVGD). Cys1704 and Cys1782 are joined by a disulfide. Disulfide bonds link Cys1811–Cys1883, Cys1897–Cys1966, and Cys1908–Cys1964. Residues Asn2016 and Asn2047 are each glycosylated (N-linked (GlcNAc...) asparagine). The tract at residues 2081–2113 (SDEGDGYQADEDIGGEDDAEDVDGEGDDEDDNI) is disordered. Over residues 2082 to 2112 (DEGDGYQADEDIGGEDDAEDVDGEGDDEDDN) the composition is skewed to acidic residues. 4 N-linked (GlcNAc...) asparagine glycosylation sites follow: Asn2143, Asn2211, Asn2239, and Asn2255. 6-Cys domains are found at residues 2197 to 2354 (IINI…VKSN) and 2357 to 2481 (KIYG…YEPY). 3 disulfide bridges follow: Cys2361/Cys2386, Cys2400/Cys2461, and Cys2411/Cys2459.

The protein localises to the cell surface. It localises to the cell membrane. Functionally, plays an essential role in male gamete fertility. Required for the binding to erythrocytes and thus, for the formation of exflagellation centers. This chain is Male gametocyte surface protein P230p (PFS230P), found in Plasmodium falciparum (isolate 3D7).